We begin with the raw amino-acid sequence, 229 residues long: B-cell antigen receptor complex-associated protein beta chain (229 aa).

The N-terminal stretch at 1–28 is a signal peptide; it reads MARLALSPVPSHWMVALLLLLSAEPVPA. The Extracellular portion of the chain corresponds to 29-159; it reads ARSEDRYRNP…QLKQRNTLKD (131 aa). One can recognise an Ig-like V-type domain in the interval 38 to 138; it reads PKGSACSRIW…TSEVYQGCGT (101 aa). Cystine bridges form between Cys43–Cys126 and Cys65–Cys122. Residues Asn73, Asn101, Asn127, and Asn128 are each glycosylated (N-linked (GlcNAc...) asparagine). The helical transmembrane segment at 160 to 180 threads the bilayer; sequence GIIMIQTLLIILFIIVPIFLL. Over 181–229 the chain is Cytoplasmic; the sequence is LDKDDSKAGMEEDHTYEGLDIDQTATYEDIVTLRTGEVKWSVGEHPGQE. An ITAM domain is found at 185–213; sequence DSKAGMEEDHTYEGLDIDQTATYEDIVTL. Tyr196 and Tyr207 each carry phosphotyrosine; by SRC-type Tyr-kinases.

Heterodimer of alpha and beta chains; disulfide-linked. Part of the B-cell antigen receptor complex where the alpha/beta chain heterodimer is non-covalently associated with an antigen-specific membrane-bound surface immunoglobulin of two heavy chains and two light chains. Interacts with LYN. Phosphorylated on tyrosine upon B-cell activation by SRC-type Tyr-kinases such as BLK, LYN and SYK. B-cells.

Its subcellular location is the cell membrane. Its function is as follows. Required in cooperation with CD79A for initiation of the signal transduction cascade activated by the B-cell antigen receptor complex (BCR) which leads to internalization of the complex, trafficking to late endosomes and antigen presentation. Enhances phosphorylation of CD79A, possibly by recruiting kinases which phosphorylate CD79A or by recruiting proteins which bind to CD79A and protect it from dephosphorylation. The chain is B-cell antigen receptor complex-associated protein beta chain (CD79B) from Homo sapiens (Human).